A 783-amino-acid chain; its full sequence is DNA ligase (783 aa).

Residues Asp-42 to Asp-46, Ser-91 to Leu-92, and Glu-125 each bind NAD(+). Lys-127 (N6-AMP-lysine intermediate) is an active-site residue. NAD(+) is bound by residues Arg-148, Glu-185, Lys-302, and Lys-326. Positions 421, 423, 445, and 451 each coordinate Zn(2+). The 79-residue stretch at Lys-705–Gly-783 folds into the BRCT domain.

Belongs to the NAD-dependent DNA ligase family. LigA subfamily. Requires Mg(2+) as cofactor. It depends on Mn(2+) as a cofactor.

It carries out the reaction NAD(+) + (deoxyribonucleotide)n-3'-hydroxyl + 5'-phospho-(deoxyribonucleotide)m = (deoxyribonucleotide)n+m + AMP + beta-nicotinamide D-nucleotide.. In terms of biological role, DNA ligase that catalyzes the formation of phosphodiester linkages between 5'-phosphoryl and 3'-hydroxyl groups in double-stranded DNA using NAD as a coenzyme and as the energy source for the reaction. It is essential for DNA replication and repair of damaged DNA. This chain is DNA ligase, found in Caulobacter vibrioides (strain ATCC 19089 / CIP 103742 / CB 15) (Caulobacter crescentus).